Here is a 322-residue protein sequence, read N- to C-terminus: ATP-dependent 6-phosphofructokinase 1 (322 aa).

Gly11 contributes to the ATP binding site. 21-25 (RAVVR) serves as a coordination point for ADP. Residues 72–73 (RS) and 102–105 (GDGT) each bind ATP. Asp103 contacts Mg(2+). Residue 126 to 128 (TID) coordinates substrate. Residue Asp128 is the Proton acceptor of the active site. Arg155 contacts ADP. Substrate is bound by residues Arg163 and 170–172 (MGR). Residues 186–188 (GAE), Arg212, and 214–216 (KKS) each bind ADP. Substrate is bound by residues Glu223, Arg246, and 252–255 (HIQR).

The protein belongs to the phosphofructokinase type A (PFKA) family. ATP-dependent PFK group I subfamily. Prokaryotic clade 'B1' sub-subfamily. Homotetramer. Mg(2+) serves as cofactor.

It is found in the cytoplasm. It carries out the reaction beta-D-fructose 6-phosphate + ATP = beta-D-fructose 1,6-bisphosphate + ADP + H(+). The protein operates within carbohydrate degradation; glycolysis; D-glyceraldehyde 3-phosphate and glycerone phosphate from D-glucose: step 3/4. Allosterically activated by ADP and other diphosphonucleosides. Allosterically inhibited by phosphoenolpyruvate which induces the dissociation of the active tetramer into an inactive two-subunit forms. Its function is as follows. Catalyzes the phosphorylation of D-fructose 6-phosphate to fructose 1,6-bisphosphate by ATP, the first committing step of glycolysis. The protein is ATP-dependent 6-phosphofructokinase 1 of Thermus thermophilus (strain ATCC 27634 / DSM 579 / HB8).